Here is a 316-residue protein sequence, read N- to C-terminus: HPr kinase/phosphorylase (316 aa).

Catalysis depends on residues His143 and Lys164. 158 to 165 (GEAGSGKS) provides a ligand contact to ATP. Residue Ser165 participates in Mg(2+) binding. The active-site Proton acceptor; for phosphorylation activity. Proton donor; for dephosphorylation activity is the Asp182. Residues 206-215 (LEVRGLGVLN) form an important for the catalytic mechanism of both phosphorylation and dephosphorylation region. Glu207 serves as a coordination point for Mg(2+). Residue Arg251 is part of the active site. Positions 272–277 (PVMPGR) are important for the catalytic mechanism of dephosphorylation.

Belongs to the HPrK/P family. As to quaternary structure, homohexamer. Requires Mg(2+) as cofactor.

It catalyses the reaction [HPr protein]-L-serine + ATP = [HPr protein]-O-phospho-L-serine + ADP + H(+). It carries out the reaction [HPr protein]-O-phospho-L-serine + phosphate + H(+) = [HPr protein]-L-serine + diphosphate. Functionally, catalyzes the ATP- as well as the pyrophosphate-dependent phosphorylation of a specific serine residue in HPr, a phosphocarrier protein of the phosphoenolpyruvate-dependent sugar phosphotransferase system (PTS). HprK/P also catalyzes the pyrophosphate-producing, inorganic phosphate-dependent dephosphorylation (phosphorolysis) of seryl-phosphorylated HPr (P-Ser-HPr). This Xylella fastidiosa (strain 9a5c) protein is HPr kinase/phosphorylase.